A 424-amino-acid chain; its full sequence is Serine--tRNA ligase (424 aa).

Position 231 to 233 (231 to 233) interacts with L-serine; sequence TAE. 262–264 is an ATP binding site; that stretch reads RSE. L-serine is bound at residue Glu285. Residue 349 to 352 coordinates ATP; it reads EISS. Ser385 provides a ligand contact to L-serine.

This sequence belongs to the class-II aminoacyl-tRNA synthetase family. Type-1 seryl-tRNA synthetase subfamily. In terms of assembly, homodimer. The tRNA molecule binds across the dimer.

It localises to the cytoplasm. It carries out the reaction tRNA(Ser) + L-serine + ATP = L-seryl-tRNA(Ser) + AMP + diphosphate + H(+). The enzyme catalyses tRNA(Sec) + L-serine + ATP = L-seryl-tRNA(Sec) + AMP + diphosphate + H(+). Its pathway is aminoacyl-tRNA biosynthesis; selenocysteinyl-tRNA(Sec) biosynthesis; L-seryl-tRNA(Sec) from L-serine and tRNA(Sec): step 1/1. Functionally, catalyzes the attachment of serine to tRNA(Ser). Is also able to aminoacylate tRNA(Sec) with serine, to form the misacylated tRNA L-seryl-tRNA(Sec), which will be further converted into selenocysteinyl-tRNA(Sec). This is Serine--tRNA ligase from Marinobacter nauticus (strain ATCC 700491 / DSM 11845 / VT8) (Marinobacter aquaeolei).